The primary structure comprises 236 residues: LexA repressor (236 aa).

Residues 26-46 (FDEMKDALDLRSKSGIHRLIT) constitute a DNA-binding region (H-T-H motif). Residues 85 to 109 (PSVIEGNLGKVRPPSPTPAEDDHDR) are disordered. Active-site for autocatalytic cleavage activity residues include Ser-157 and Lys-195.

The protein belongs to the peptidase S24 family. Homodimer.

It catalyses the reaction Hydrolysis of Ala-|-Gly bond in repressor LexA.. In terms of biological role, represses a number of genes involved in the response to DNA damage (SOS response), including recA and lexA. In the presence of single-stranded DNA, RecA interacts with LexA causing an autocatalytic cleavage which disrupts the DNA-binding part of LexA, leading to derepression of the SOS regulon and eventually DNA repair. This chain is LexA repressor, found in Rhodopseudomonas palustris (strain ATCC BAA-98 / CGA009).